A 608-amino-acid chain; its full sequence is RAS guanyl-releasing protein 2 (608 aa).

An N-terminal Ras-GEF domain is found at 4 to 126 (TLDLDKGCTV…SLIDIESVPT (123 aa)). Phosphoserine occurs at positions 116, 117, and 147. Residues 154-387 (EPMELAEHLT…YQLSLQREPR (234 aa)) enclose the Ras-GEF domain. The interval 382-405 (LQREPRSKSSPTSPTSCTPPPRPP) is disordered. 2 consecutive EF-hand domains span residues 426 to 461 (HIEK…FPYL) and 463 to 490 (AFGD…SSSV). Positions 439, 441, 443, 445, 450, 468, 470, 472, 474, and 479 each coordinate Ca(2+). The Phorbol-ester/DAG-type zinc finger occupies 498–548 (VHNLQESNSLRPVACRHCKALILGIYKQGLKCRACGVNCHKQCKDRLSVEC). S554 and S575 each carry phosphoserine. The interval 555–596 (VSLEGSAPSPSPTHTHHRAFSFSLPRPGRRSSRPPEIREEEV) is disordered.

Belongs to the RASGRP family. In terms of assembly, forms a signaling complex with RAP1 and BRAF. Interacts with F-actin. Interacts with RAP1. Expressed in striatal neurons (at protein level). Expressed in the hematopoietic system. Detected in olfactory structures and deep cortical layers of brain.

The protein localises to the cytoplasm. It localises to the cytosol. The protein resides in the cell membrane. Its subcellular location is the synapse. It is found in the synaptosome. The protein localises to the cell projection. It localises to the ruffle membrane. Its function is as follows. Functions as a calcium- and DAG-regulated nucleotide exchange factor specifically activating Rap through the exchange of bound GDP for GTP. May also activate other GTPases such as RRAS, RRAS2, NRAS, KRAS but not HRAS. Functions in aggregation of platelets and adhesion of T-lymphocytes and neutrophils probably through inside-out integrin activation. May function in the muscarinic acetylcholine receptor M1/CHRM1 signaling pathway. In Rattus norvegicus (Rat), this protein is RAS guanyl-releasing protein 2 (Rasgrp2).